The following is a 432-amino-acid chain: Glutamate-1-semialdehyde 2,1-aminomutase (432 aa).

At Lys-271 the chain carries N6-(pyridoxal phosphate)lysine.

It belongs to the class-III pyridoxal-phosphate-dependent aminotransferase family. HemL subfamily. As to quaternary structure, homodimer. It depends on pyridoxal 5'-phosphate as a cofactor.

It localises to the cytoplasm. The catalysed reaction is (S)-4-amino-5-oxopentanoate = 5-aminolevulinate. It functions in the pathway porphyrin-containing compound metabolism; protoporphyrin-IX biosynthesis; 5-aminolevulinate from L-glutamyl-tRNA(Glu): step 2/2. It participates in porphyrin-containing compound metabolism; chlorophyll biosynthesis. The chain is Glutamate-1-semialdehyde 2,1-aminomutase from Prochlorococcus marinus (strain MIT 9211).